The following is a 1773-amino-acid chain: Mucin-22 (1773 aa).

An N-terminal signal peptide occupies residues 1–26 (MRRGNISPAFWFLWLLLFGLLGPSSE). The Extracellular portion of the chain corresponds to 27-1660 (NTTAFTKGSD…VIKPSGYLQP (1634 aa)). Disordered regions lie at residues 61-102 (TGSK…TDSG), 176-357 (TMAS…SETT), 372-405 (MGSE…VGSE), 434-572 (SETI…STAS), 590-674 (TVGS…EGSE), 754-1026 (DTTT…ETTM), 1064-1485 (TTIA…GSET), and 1603-1639 (MGAS…SMGT). Positions 153–1514 (MASSTTSTAG…PTATSLTGSE (1362 aa)) are 124 X 10 AA approximate repeats. Residues 178 to 243 (ASTTGSETAT…GSEATTTSTA (66 aa)) show a composition bias toward low complexity. A compositionally biased stretch (polar residues) spans 248–258 (ITASSMSSETT). The span at 262-357 (AAGSNTTTAS…TVSTAGSETT (96 aa)) shows a compositional bias: low complexity. 2 stretches are compositionally biased toward low complexity: residues 440 to 481 (STAG…AAST) and 490 to 546 (STAG…SEPT). Residues 547–572 (MASTMGSETTMASTIGPETTKVSTAS) show a composition bias toward polar residues. Low complexity-rich tracts occupy residues 755–1025 (TTTA…SETT) and 1064–1465 (TTIA…GSET). Composition is skewed to polar residues over residues 1466 to 1485 (NTAC…GSET) and 1615 to 1639 (RTTT…SMGT). A helical membrane pass occupies residues 1661 to 1681 (WAIILISLAAVVAAVGLSVGL). Residues 1682-1773 (SFCLRNLFFP…GGHYGHGGGH (92 aa)) are Cytoplasmic-facing.

Expressed in lung by serous cells of the submucosal gland (at protein level). Detected in the placenta, lung and testis.

It localises to the membrane. The protein is Mucin-22 (MUC22) of Homo sapiens (Human).